A 269-amino-acid chain; its full sequence is Probable membrane transporter protein YfcA (269 aa).

Residues 1-7 lie on the Periplasmic side of the membrane; it reads METFNSL. Residues 8-28 form a helical membrane-spanning segment; the sequence is FMVSPLLLGVLFFVAMLAGFI. At 29 to 30 the chain is on the cytoplasmic side; the sequence is DS. The chain crosses the membrane as a helical span at residues 31–51; it reads IAGGGGLLTIPALMAAGMSPA. The Periplasmic segment spans residues 52–84; the sequence is NALATNKLQACGGSISATIYFIRRKVVSLSDQK. Residues 85-105 traverse the membrane as a helical segment; that stretch reads LNIAMTFVGSMSGALLVQYVQ. Residues 106–111 are Cytoplasmic-facing; it reads ADVLRQ. A helical transmembrane segment spans residues 112 to 132; the sequence is ILPILVICIGLYFLLMPKLGE. Residues 133 to 156 are Periplasmic-facing; it reads EDRQRRMYGLPFALIAGGCVGFYD. A helical membrane pass occupies residues 157–177; it reads GFFGPAAGSFYALAFVTLCGF. Topologically, residues 178–197 are cytoplasmic; it reads NLAKATAHAKLLNATSNIGG. A helical transmembrane segment spans residues 198–218; that stretch reads LLLFILGGKVIWATGFVMLVG. At 219–269 the chain is on the periplasmic side; it reads QFLGARMGSRLVLSKGQKLIRPMIVIVSAVMSAKLLYDSHGQEILHWLGMN.

Belongs to the 4-toluene sulfonate uptake permease (TSUP) (TC 2.A.102) family.

It localises to the cell inner membrane. This Escherichia coli O157:H7 protein is Probable membrane transporter protein YfcA (yfcA).